A 289-amino-acid polypeptide reads, in one-letter code: SAGA-associated factor 29kDa (289 aa).

Positions Ala-9–Ser-36 form a coiled coil. An SGF29 C-terminal domain is found at Gly-137 to Gly-278. 2 histone H3K4me3 N-terminus binding regions span residues Asp-179 to Asp-181 and Gln-225 to Cys-228. Residues Phe-249–Asp-251 form a histone H3K4me3 binding region.

Belongs to the SGF29 family. As to quaternary structure, component of the Spt-Ada-Gcn5 acetyltransferase (SAGA) complex consisting of wda/Taf5L, Saf6, Taf9, Taf10b, Taf12, Ada1, Spt3, Spt7, Spt20, Sf3b3, Sf3b5, Nipped-A/Tra1, a histone acetyltransferase (HAT) module made up of Gcn5, Ada2b (Isoform B), Ada3 and Sgf29, and a deubiquitinase (DUB) module made up of not/nonstop, Sgf11, Atxn7 and e(y)2. Component of the Chiffon histone acetyltransferase (CHAT) complex consisting of Ada3, Sgf29, Gcn5, chif/chiffon and Ada2b (Isoform A).

The protein localises to the nucleus. Its function is as follows. Component of both the SAGA and CHAT histone acetyltransferase complexes, which both predominantly acetylate histone H3. This chain is SAGA-associated factor 29kDa, found in Drosophila melanogaster (Fruit fly).